The following is a 142-amino-acid chain: FAD synthase (142 aa).

ATP is bound by residues Thr9–Phe10, His14–His17, and Asp92.

This sequence belongs to the archaeal FAD synthase family. In terms of assembly, homodimer. It depends on a divalent metal cation as a cofactor.

It catalyses the reaction FMN + ATP + H(+) = FAD + diphosphate. It participates in cofactor biosynthesis; FAD biosynthesis; FAD from FMN: step 1/1. Functionally, catalyzes the transfer of the AMP portion of ATP to flavin mononucleotide (FMN) to produce flavin adenine dinucleotide (FAD) coenzyme. The protein is FAD synthase of Methanohalophilus mahii (strain ATCC 35705 / DSM 5219 / SLP).